We begin with the raw amino-acid sequence, 382 residues long: Nuclear hormone receptor family member nhr-106 (382 aa).

The nuclear receptor DNA-binding region spans glutamine 2 to valine 78. 2 NR C4-type zinc fingers span residues cysteine 5–cysteine 25 and cysteine 42–cysteine 61. The NR LBD domain maps to aspartate 110–serine 380.

This sequence belongs to the nuclear hormone receptor family.

It is found in the nucleus. In terms of biological role, orphan nuclear receptor. This chain is Nuclear hormone receptor family member nhr-106 (nhr-106), found in Caenorhabditis elegans.